The chain runs to 188 residues: MNKTATCELLLFVSGEAGLTLTELSSLTEMSKQACQQQIDYLKEKYHSDRESALTIIETAGKYRMATKEDFSEILKNYAKTPLNQSLSKSALEVLSIIAYKQPLTRIEIDQLRGVNSSGVLSTLRAFDLVEKVGQVEAPGRPSLYATTEFFLDYIGINNLEELPEIDESRYVAEQQTLFNESEENENQ.

Belongs to the ScpB family. As to quaternary structure, homodimer. Homodimerization may be required to stabilize the binding of ScpA to the Smc head domains. Component of a cohesin-like complex composed of ScpA, ScpB and the Smc homodimer, in which ScpA and ScpB bind to the head domain of Smc. The presence of the three proteins is required for the association of the complex with DNA.

The protein resides in the cytoplasm. Participates in chromosomal partition during cell division. May act via the formation of a condensin-like complex containing Smc and ScpA that pull DNA away from mid-cell into both cell halves. This chain is Segregation and condensation protein B, found in Lactococcus lactis subsp. cremoris (strain MG1363).